The sequence spans 145 residues: Peptide methionine sulfoxide reductase MsrB (145 aa).

Positions E6–V129 constitute a MsrB domain. C118 serves as the catalytic Nucleophile.

It belongs to the MsrB Met sulfoxide reductase family.

The catalysed reaction is L-methionyl-[protein] + [thioredoxin]-disulfide + H2O = L-methionyl-(R)-S-oxide-[protein] + [thioredoxin]-dithiol. In Enterococcus faecalis (strain ATCC 700802 / V583), this protein is Peptide methionine sulfoxide reductase MsrB.